A 1347-amino-acid chain; its full sequence is MNKVEAGNELGFRVGFSGHGGHLRVEPFYTAERDDALNSLPDFVSPPAFAKETKESIKKHIEEKYLIPRLEPDQFSAEKAENQWDFDWFSRVKMPLQPSLPRSVVVPTWELPFRRQKEDTENGAWEPKSVEVDLSEQMYGDQDSGFFPRMVGPPKDFLRGSVNNRPFRPGGLEDSQSSERVLPEGVSSGQWVQELLNGGPAQTVPPSFKQSLDLGDLMPYPQTWSVYEDHSSHGNASDENSSKLSIQFDDLFKKAWEEDTFSELEGDDHTAGSESPKAEAEPDAKASISNEVSKGLETDVTVLDEILSSAKTAIMSEEAVTGSSDKQLRKEGWATKGDSQDIADRFYELVPDMAIEFPFELDNFQKEAICCLEKGESVFVAAHTSAGKTVVAEYAFALATKHCTRAVYTAPIKTISNQKYRDFCGKFDVGLLTGDVSIRPEASCLIMTTEILRSMLYRGADIIRDIEWVIFDEVHYVNDVERGVVWEEVIIMLPRHINFVLLSATVPNTFEFADWIGRTKQKEIRVTGTTKRPVPLEHCLFYSGELYKVCENEVFLSKGIKDAKDSQKKKNSNAVSVAPKQQMGSSAHQDGSKSQKHEAHSRGKQNKHSSVKDVGKSSYSGNSQNNGAFRRSAASNWLLLINKLSKMSLLPVVVFCFSKNYCDRCADALTGTDLTSSSEKSEIRVFCDKAFSRLKGSDRNLPQVLRLQSLLHRGIGVHHAGLLPIVKEVVEMLFCRGVIKVLFSTETFAMGVNAPARTVVFDALRKFDGKEFRQLLPGEYTQMAGRAGRRGLDKTGTVVVMCRDEVPDESDLRRVIVGSATRLESQFRLTYIMILHLLRVEELKVEDMLKRSFAEFHAQKKLPEKQQLLMIKRSLPTKHIECIKGEPAIEDYYDMYMEANEYNNKMSEAVMQSPYAQSFLVQGRVVVMKSGMGIDNLLGIVLKGPSNTNRQYVVLVIKSEIPPPEKNMVSIGKKSSDPSQGYFIAPKSKRGFEEEFYTKPSSRKGPVVIKIELPYHGVAAGVGYEVKGFDNKEFLCICDSKIKIDQVRLLEDGNKAAFSQTVQQLLDLKSDGNKFPPALDPVKDLKLKDAELVETYYKWTNLLQKMSMNKCHGCVKLEEHMKLAREIKKHKTDLKDLEFQMSDEALLQMPAFQGRIDVLKNIGCIDDDLVVQIKGRVACEMNSGEELICTVCLFENQFEELEPEEAVAIMSAFVFQQKNTSAPTLTPKLAKAKQRLYDTAIRLGELQAQYNLQIDPEEYAQENLKFGLVEVVYEWAKGTPFAEICELTDVPEGLIVRTIVRLDETCREFKNAAAIMGNSALHKKMDAASNAIKRDIVFAASLYVTGV.

The segment at 263–291 is disordered; it reads ELEGDDHTAGSESPKAEAEPDAKASISNE. The span at 267 to 284 shows a compositional bias: basic and acidic residues; sequence DDHTAGSESPKAEAEPDA. The Helicase ATP-binding domain occupies 369–524; that stretch reads ICCLEKGESV…WIGRTKQKEI (156 aa). 382-389 provides a ligand contact to ATP; sequence AHTSAGKT. The short motif at 472–475 is the DEVH box element; it reads DEVH. Positions 566 to 625 are disordered; the sequence is SQKKKNSNAVSVAPKQQMGSSAHQDGSKSQKHEAHSRGKQNKHSSVKDVGKSSYSGNSQN. The segment covering 590–601 has biased composition (basic and acidic residues); it reads DGSKSQKHEAHS. The Helicase C-terminal domain occupies 673–838; that stretch reads DLTSSSEKSE…LTYIMILHLL (166 aa).

This sequence belongs to the DExH box helicase family. SKI2 subfamily. In terms of assembly, component of the cytoplasmic SKI complex, which consists of SKI2, SKI3 and VIP3/SKI8. As to expression, expressed in vascular tissues of leaves and roots of young plants.

It is found in the cytoplasm. The enzyme catalyses ATP + H2O = ADP + phosphate + H(+). Functionally, component of the SKI complex which is thought to be involved in exosome-mediated RNA decay and associates with transcriptionally active genes in a manner dependent on PAF1 complex (PAF1C). Involved in the regulation of potassium deprivation stress response. The polypeptide is DExH-box ATP-dependent RNA helicase DExH11 (Arabidopsis thaliana (Mouse-ear cress)).